We begin with the raw amino-acid sequence, 623 residues long: Phosphoenolpyruvate carboxykinase [GTP] (623 aa).

Substrate-binding positions include R86 and Y220–G222. K229 and H248 together coordinate Mn(2+). S270 provides a ligand contact to substrate. M271–S276 contributes to the GTP binding site. Residue C272 is part of the active site. D289 is a Mn(2+) binding site. N384–R386 contacts substrate. Positions 386 and 418 each coordinate GTP.

This sequence belongs to the phosphoenolpyruvate carboxykinase [GTP] family. As to quaternary structure, homotetramer. Mn(2+) serves as cofactor.

The protein localises to the cytoplasm. It carries out the reaction oxaloacetate + GTP = phosphoenolpyruvate + GDP + CO2. It functions in the pathway carbohydrate biosynthesis; gluconeogenesis. In terms of biological role, involved in the gluconeogenesis. Catalyzes the conversion of oxaloacetate (OAA) to phosphoenolpyruvate (PEP), the rate-limiting step in the metabolic pathway that produces glucose from lactate and other precursors derived from the citric acid cycle. This chain is Phosphoenolpyruvate carboxykinase [GTP] (pckG), found in Thermococcus kodakarensis (strain ATCC BAA-918 / JCM 12380 / KOD1) (Pyrococcus kodakaraensis (strain KOD1)).